A 778-amino-acid polypeptide reads, in one-letter code: LPS-assembly protein LptD (778 aa).

The first 23 residues, 1–23, serve as a signal peptide directing secretion; the sequence is MKTRYSVLSVAMTAAFYTQYAQA.

The protein belongs to the LptD family. Component of the lipopolysaccharide transport and assembly complex. Interacts with LptE and LptA.

The protein localises to the cell outer membrane. In terms of biological role, together with LptE, is involved in the assembly of lipopolysaccharide (LPS) at the surface of the outer membrane. This Actinobacillus pleuropneumoniae serotype 5b (strain L20) protein is LPS-assembly protein LptD.